Here is a 209-residue protein sequence, read N- to C-terminus: Ribosomal RNA large subunit methyltransferase E (209 aa).

Residues Gly-63, Trp-65, Asp-83, Asp-99, and Asp-124 each contribute to the S-adenosyl-L-methionine site. The active-site Proton acceptor is Lys-164.

The protein belongs to the class I-like SAM-binding methyltransferase superfamily. RNA methyltransferase RlmE family.

The protein resides in the cytoplasm. It carries out the reaction uridine(2552) in 23S rRNA + S-adenosyl-L-methionine = 2'-O-methyluridine(2552) in 23S rRNA + S-adenosyl-L-homocysteine + H(+). Specifically methylates the uridine in position 2552 of 23S rRNA at the 2'-O position of the ribose in the fully assembled 50S ribosomal subunit. The sequence is that of Ribosomal RNA large subunit methyltransferase E from Cronobacter sakazakii (strain ATCC BAA-894) (Enterobacter sakazakii).